A 73-amino-acid chain; its full sequence is Translation initiation factor IF-1 3 (73 aa).

Residues 1-72 (MAKEELVEFG…TKGRINYRHK (72 aa)) form the S1-like domain.

Belongs to the IF-1 family. Component of the 30S ribosomal translation pre-initiation complex which assembles on the 30S ribosome in the order IF-2 and IF-3, IF-1 and N-formylmethionyl-tRNA(fMet); mRNA recruitment can occur at any time during PIC assembly.

It localises to the cytoplasm. Its function is as follows. One of the essential components for the initiation of protein synthesis. Stabilizes the binding of IF-2 and IF-3 on the 30S subunit to which N-formylmethionyl-tRNA(fMet) subsequently binds. Helps modulate mRNA selection, yielding the 30S pre-initiation complex (PIC). Upon addition of the 50S ribosomal subunit IF-1, IF-2 and IF-3 are released leaving the mature 70S translation initiation complex. The polypeptide is Translation initiation factor IF-1 3 (Cupriavidus metallidurans (strain ATCC 43123 / DSM 2839 / NBRC 102507 / CH34) (Ralstonia metallidurans)).